A 282-amino-acid chain; its full sequence is Pantothenate synthetase (282 aa).

30–37 (MGYYHAGH) is a binding site for ATP. Residue H37 is the Proton donor of the active site. Residue Q61 coordinates (R)-pantoate. Q61 serves as a coordination point for beta-alanine. 147 to 150 (GQKD) contacts ATP. Position 153 (Q153) interacts with (R)-pantoate. ATP-binding positions include V176 and 184-187 (LSSR).

It belongs to the pantothenate synthetase family. In terms of assembly, homodimer.

Its subcellular location is the cytoplasm. It carries out the reaction (R)-pantoate + beta-alanine + ATP = (R)-pantothenate + AMP + diphosphate + H(+). It functions in the pathway cofactor biosynthesis; (R)-pantothenate biosynthesis; (R)-pantothenate from (R)-pantoate and beta-alanine: step 1/1. Catalyzes the condensation of pantoate with beta-alanine in an ATP-dependent reaction via a pantoyl-adenylate intermediate. In Desulfovibrio desulfuricans (strain ATCC 27774 / DSM 6949 / MB), this protein is Pantothenate synthetase.